We begin with the raw amino-acid sequence, 251 residues long: Small ribosomal subunit protein uS2 (251 aa).

The protein belongs to the universal ribosomal protein uS2 family.

The polypeptide is Small ribosomal subunit protein uS2 (Cereibacter sphaeroides (strain ATCC 17029 / ATH 2.4.9) (Rhodobacter sphaeroides)).